Here is a 426-residue protein sequence, read N- to C-terminus: 3-phosphoshikimate 1-carboxyvinyltransferase (426 aa).

Residues Lys-22, Ser-23, and Arg-27 each coordinate 3-phosphoshikimate. Lys-22 lines the phosphoenolpyruvate pocket. 2 residues coordinate phosphoenolpyruvate: Gly-96 and Arg-124. 3-phosphoshikimate-binding residues include Ser-170, Ser-171, Gln-172, Ser-198, Asp-314, Asn-337, and Lys-341. Gln-172 contributes to the phosphoenolpyruvate binding site. The active-site Proton acceptor is Asp-314. Arg-345, Arg-387, and Lys-412 together coordinate phosphoenolpyruvate.

It belongs to the EPSP synthase family. As to quaternary structure, monomer.

The protein resides in the cytoplasm. The catalysed reaction is 3-phosphoshikimate + phosphoenolpyruvate = 5-O-(1-carboxyvinyl)-3-phosphoshikimate + phosphate. It participates in metabolic intermediate biosynthesis; chorismate biosynthesis; chorismate from D-erythrose 4-phosphate and phosphoenolpyruvate: step 6/7. In terms of biological role, catalyzes the transfer of the enolpyruvyl moiety of phosphoenolpyruvate (PEP) to the 5-hydroxyl of shikimate-3-phosphate (S3P) to produce enolpyruvyl shikimate-3-phosphate and inorganic phosphate. The polypeptide is 3-phosphoshikimate 1-carboxyvinyltransferase (Shewanella sp. (strain ANA-3)).